We begin with the raw amino-acid sequence, 505 residues long: Metal transporter Nramp3.2 (505 aa).

The next 12 membrane-spanning stretches (helical) occupy residues 50–70 (LWLF…PGNL), 78–98 (AIAG…GLLV), 127–147 (MVLW…EVIG), 159–179 (FVPL…FLFL), 187–207 (LEAV…WMFA), 233–253 (AVGV…SALV), 280–300 (ALVI…KGFY), 321–341 (YGGG…AAGQ), 369–389 (ALIT…VFDT), 400–420 (WLNV…LCLV), 439–459 (AWLV…DFFF), and 466–486 (AFTT…IYLI).

The protein belongs to the NRAMP (TC 2.A.55) family. As to expression, expressed in roots, stems, buds and leaves.

It localises to the vacuole membrane. The enzyme catalyses Mn(2+)(in) = Mn(2+)(out). It catalyses the reaction Fe(2+)(in) = Fe(2+)(out). Its function is as follows. Divalent metal transporter. Can transport manganese (Mn) and iron (Fe). Involved in the release of metals stored in the vacuole. This is Metal transporter Nramp3.2 from Populus trichocarpa (Western balsam poplar).